Here is a 397-residue protein sequence, read N- to C-terminus: F-box protein At5g25290 (397 aa).

Residues 11 to 56 (VTLWSEIPMDILRSVFERLSFVDLHRAKIVCSHWYSCSKQSFLRKT) enclose the F-box domain.

This chain is F-box protein At5g25290, found in Arabidopsis thaliana (Mouse-ear cress).